We begin with the raw amino-acid sequence, 309 residues long: Protein FdhE (309 aa).

Belongs to the FdhE family.

It is found in the cytoplasm. Its function is as follows. Necessary for formate dehydrogenase activity. The sequence is that of Protein FdhE from Salmonella arizonae (strain ATCC BAA-731 / CDC346-86 / RSK2980).